We begin with the raw amino-acid sequence, 159 residues long: Protein-export protein SecB (159 aa).

The protein belongs to the SecB family. As to quaternary structure, homotetramer, a dimer of dimers. One homotetramer interacts with 1 SecA dimer.

It is found in the cytoplasm. One of the proteins required for the normal export of preproteins out of the cell cytoplasm. It is a molecular chaperone that binds to a subset of precursor proteins, maintaining them in a translocation-competent state. It also specifically binds to its receptor SecA. This is Protein-export protein SecB from Bartonella bacilliformis (strain ATCC 35685 / KC583 / Herrer 020/F12,63).